The following is a 524-amino-acid chain: Cytochrome P450 4F3 (524 aa).

A helical membrane pass occupies residues 19 to 39 (WLLLLLAGASCLLAYILTPIY). Cys468 provides a ligand contact to heme.

It belongs to the cytochrome P450 family. Requires heme as cofactor. In terms of tissue distribution, highest level in polymorphonuclear leukocytes and dendritic cells. Detectable in lymph nodes, spleen, bone marrow and peripheral blood. Highly expressed in ovary. Very low level in liver, kidney, and smooth muscle. Expressed in neutrophils (at protein level).

It localises to the endoplasmic reticulum membrane. The protein localises to the microsome membrane. It carries out the reaction leukotriene B4 + reduced [NADPH--hemoprotein reductase] + O2 = 18-hydroxy-leukotriene B4 + oxidized [NADPH--hemoprotein reductase] + H2O + H(+). The catalysed reaction is leukotriene B4 + reduced [NADPH--hemoprotein reductase] + O2 = 19-hydroxy-leukotriene B4 + oxidized [NADPH--hemoprotein reductase] + H2O + H(+). Its pathway is lipid metabolism; leukotriene B4 degradation. In terms of biological role, a cytochrome P450 monooxygenase involved in the metabolism of the pro-inflammatory lipid mediator leukotriene B4 (LTB4). Hydroxylates at the omega-1 and omega-2 positions LTB4. This oxidation step leads to LTB4 inactivation, which is postulated to be a crucial part of the resolution of inflammation. Mechanistically, uses molecular oxygen inserting one oxygen atom into a substrate, and reducing the second into a water molecule, with two electrons provided by NADPH via cytochrome P450 reductase (CPR; NADPH-ferrihemoprotein reductase). The polypeptide is Cytochrome P450 4F3 (Mus musculus (Mouse)).